Reading from the N-terminus, the 313-residue chain is Tyrosine recombinase slr0733 (313 aa).

Positions 7–101 constitute a Core-binding (CB) domain; it reads NNLSGLNQNI…AIKSLVNYAR (95 aa). A Tyr recombinase domain is found at 122-307; it reads RDTTGVSPTS…RHQHQAQITD (186 aa). Catalysis depends on residues arginine 162, lysine 188, histidine 258, arginine 261, and histidine 285. The active-site O-(3'-phospho-DNA)-tyrosine intermediate is tyrosine 294.

The protein belongs to the 'phage' integrase family.

The protein resides in the cytoplasm. Functionally, site-specific tyrosine recombinase, which acts by catalyzing the cutting and rejoining of the recombining DNA molecules. The protein is Tyrosine recombinase slr0733 of Synechocystis sp. (strain ATCC 27184 / PCC 6803 / Kazusa).